Reading from the N-terminus, the 289-residue chain is Ubiquinone biosynthesis O-methyltransferase (289 aa).

An S-adenosyl-L-methionine-binding site is contributed by R36. The 49-residue stretch at R50 to N98 folds into the RPE1 insert domain. Positions 109, 130, and 172 each coordinate S-adenosyl-L-methionine.

The protein belongs to the methyltransferase superfamily. UbiG/COQ3 family.

The catalysed reaction is a 3-demethylubiquinol + S-adenosyl-L-methionine = a ubiquinol + S-adenosyl-L-homocysteine + H(+). It catalyses the reaction a 3-(all-trans-polyprenyl)benzene-1,2-diol + S-adenosyl-L-methionine = a 2-methoxy-6-(all-trans-polyprenyl)phenol + S-adenosyl-L-homocysteine + H(+). The protein operates within cofactor biosynthesis; ubiquinone biosynthesis. In terms of biological role, O-methyltransferase that catalyzes the 2 O-methylation steps in the ubiquinone biosynthetic pathway. The chain is Ubiquinone biosynthesis O-methyltransferase from Rickettsia conorii (strain ATCC VR-613 / Malish 7).